Here is a 197-residue protein sequence, read N- to C-terminus: Transcription factor FapR (197 aa).

It belongs to the FapR family.

In terms of biological role, transcriptional factor involved in regulation of membrane lipid biosynthesis by repressing genes involved in fatty acid and phospholipid metabolism. The sequence is that of Transcription factor FapR from Bacillus cytotoxicus (strain DSM 22905 / CIP 110041 / 391-98 / NVH 391-98).